Consider the following 31-residue polypeptide: Cytochrome b6-f complex subunit 8 (31 aa).

The chain crosses the membrane as a helical span at residues 5 to 25 (IVSMAWAALMVVFTFSLSLVI).

This sequence belongs to the PetN family. As to quaternary structure, the 4 large subunits of the cytochrome b6-f complex are cytochrome b6, subunit IV (17 kDa polypeptide, PetD), cytochrome f and the Rieske protein, while the 4 small subunits are PetG, PetL, PetM and PetN. The complex functions as a dimer.

It is found in the plastid membrane. Functionally, component of the cytochrome b6-f complex, which mediates electron transfer between photosystem II (PSII) and photosystem I (PSI), cyclic electron flow around PSI, and state transitions. In Cuscuta gronovii (Common dodder), this protein is Cytochrome b6-f complex subunit 8.